Here is a 344-residue protein sequence, read N- to C-terminus: F17d-G fimbrial adhesin (344 aa).

The N-terminal stretch at 1 to 22 (MTNFYKVFLAVFILVCCNISQA) is a signal peptide. The interval 23–199 (AVSFIGSTEN…SLNPFTLNDT (177 aa)) is receptor-binding lectin domain. A carbohydrate contacts are provided by residues 65 to 66 (AN), 110 to 111 (DT), and 139 to 142 (STQG). Cysteines 75 and 132 form a disulfide. Residues 200-344 (VTSCRLLTPS…GISTFTFSYQ (145 aa)) form a fimbrillin-binding domain region. Residues 288–308 (LKFGPDSPVKGNENQWQLSTG) form a disordered region. Polar residues predominate over residues 299 to 308 (NENQWQLSTG).

This sequence belongs to the fimbrial protein family.

It is found in the fimbrium. Essential fimbrial adhesion factor that mediates binding to N-acetylglucosamine-containing receptors in the host intestinal microvilli, leading to colonization of the intestinal tissue, and diarrhea or septicemia. Also confers adhesiveness to laminin and basement membranes. In Escherichia coli, this protein is F17d-G fimbrial adhesin (f17dG).